Consider the following 180-residue polypeptide: Putative manganese efflux pump MntP (180 aa).

The next 5 membrane-spanning stretches (helical) occupy residues valine 6–leucine 26, methionine 33–tryptophan 53, valine 63–valine 83, glycine 101–phenylalanine 121, and leucine 130–valine 150.

This sequence belongs to the MntP (TC 9.B.29) family.

The protein localises to the cell membrane. In terms of biological role, probably functions as a manganese efflux pump. This is Putative manganese efflux pump MntP from Desulforudis audaxviator (strain MP104C).